A 309-amino-acid polypeptide reads, in one-letter code: tRNA dimethylallyltransferase (309 aa).

ATP is bound at residue 9-16 (GPTAVGKT). 11 to 16 (TAVGKT) is a binding site for substrate. The interval 34–37 (DSMQ) is interaction with substrate tRNA.

Belongs to the IPP transferase family. In terms of assembly, monomer. It depends on Mg(2+) as a cofactor.

It catalyses the reaction adenosine(37) in tRNA + dimethylallyl diphosphate = N(6)-dimethylallyladenosine(37) in tRNA + diphosphate. In terms of biological role, catalyzes the transfer of a dimethylallyl group onto the adenine at position 37 in tRNAs that read codons beginning with uridine, leading to the formation of N6-(dimethylallyl)adenosine (i(6)A). In Clostridium acetobutylicum (strain ATCC 824 / DSM 792 / JCM 1419 / IAM 19013 / LMG 5710 / NBRC 13948 / NRRL B-527 / VKM B-1787 / 2291 / W), this protein is tRNA dimethylallyltransferase.